The chain runs to 53 residues: Large ribosomal subunit protein bL33 (53 aa).

This sequence belongs to the bacterial ribosomal protein bL33 family.

This Ureaplasma parvum serovar 3 (strain ATCC 27815 / 27 / NCTC 11736) protein is Large ribosomal subunit protein bL33.